Here is a 348-residue protein sequence, read N- to C-terminus: MTSVTRSEDQEPTMSETQDRPLQPSLKPLEALPQSSAYQEMMTQGVSEEKNHLGSNPGEGESCGADHQEGSQLRSFHLSPQEQSIRPQDRRQSWRRASMKEVNRRKSLAPFHPGITELCRSISVKLAQSQRLGALLLSSFQFSVEKLEPFLKNTKDFSLECFRAKASSLSEELKHFTDRLGNDGTLQKCFVEDSKEKAADFSLEASVAEVKEYITKFSLERQAWDRLLLQYQNEVPPEEMPRGSTETRITEVKVDPAAYLRSSQKEVLSTKPDYQRIVQDQNQVFAYVELVMDELQGSVKQLQALMDESTQYLQKVSVQLKKRSMDQLDSSPARKLLKLPLQSSPSTQ.

The disordered stretch occupies residues 1–105; the sequence is MTSVTRSEDQ…RASMKEVNRR (105 aa). The residue at position 25 (Ser25) is a Phosphoserine. Polar residues-rich tracts occupy residues 33-46 and 70-86; these read PQSSAYQEMMTQGV and GSQLRSFHLSPQEQSIR. Phosphoserine occurs at positions 75 and 79. Basic and acidic residues predominate over residues 87–104; that stretch reads PQDRRQSWRRASMKEVNR. A phosphoserine mark is found at Ser107 and Ser123. Lys253 is covalently cross-linked (Glycyl lysine isopeptide (Lys-Gly) (interchain with G-Cter in SUMO2)). A disordered region spans residues 325-348; the sequence is MDQLDSSPARKLLKLPLQSSPSTQ. The residue at position 331 (Ser331) is a Phosphoserine. Positions 338–348 are enriched in low complexity; that stretch reads KLPLQSSPSTQ.

As to quaternary structure, component of the MIS12 complex composed of MIS12, DSN1, NSL1 and PMF1. Also interacts with KNL1, CBX3 and CBX5. Interacts with KNSTRN.

It is found in the nucleus. The protein resides in the chromosome. The protein localises to the centromere. Its subcellular location is the kinetochore. Its function is as follows. Part of the MIS12 complex which is required for normal chromosome alignment and segregation and kinetochore formation during mitosis. This Mus musculus (Mouse) protein is Kinetochore-associated protein DSN1 homolog (Dsn1).